The sequence spans 70 residues: DNA-directed RNA polymerase subunit omega (70 aa).

Belongs to the RNA polymerase subunit omega family. In terms of assembly, the RNAP catalytic core consists of 2 alpha, 1 beta, 1 beta' and 1 omega subunit. When a sigma factor is associated with the core the holoenzyme is formed, which can initiate transcription.

The catalysed reaction is RNA(n) + a ribonucleoside 5'-triphosphate = RNA(n+1) + diphosphate. In terms of biological role, promotes RNA polymerase assembly. Latches the N- and C-terminal regions of the beta' subunit thereby facilitating its interaction with the beta and alpha subunits. The chain is DNA-directed RNA polymerase subunit omega from Bacillus mycoides (strain KBAB4) (Bacillus weihenstephanensis).